Here is a 79-residue protein sequence, read N- to C-terminus: MNRTNKLILGAVVLGSTLLAGCSSNAKIDQLSSDVQTLSAKVDQLSNDVNAMRSDVQAAKDDAARANQRLDNKVFRICK.

The signal sequence occupies residues 1-21; that stretch reads MNRTNKLILGAVVLGSTLLAG. Cys-22 carries the N-palmitoyl cysteine lipid modification. A lipid anchor (S-diacylglycerol cysteine) is attached at Cys-22. 2 consecutive repeats follow at residues 25–35 and 39–49; these read NAKIDQLSSDV and SAKVDQLSNDV. A coiled-coil region spans residues 28–69; it reads IDQLSSDVQTLSAKVDQLSNDVNAMRSDVQAAKDDAARANQR. N6-murein peptidoglycan lysine is present on Lys-79.

Belongs to the Lpp family. As to quaternary structure, homotrimer.

Its subcellular location is the cell outer membrane. The protein resides in the secreted. It localises to the cell wall. A highly abundant outer membrane lipoprotein that controls the distance between the inner and outer membranes. The only protein known to be covalently linked to the peptidoglycan network (PGN). Also non-covalently binds the PGN. The link between the cell outer membrane and PGN contributes to maintenance of the structural and functional integrity of the cell envelope, and maintains the correct distance between the PGN and the outer membrane. In Salmonella typhi, this protein is Major outer membrane lipoprotein Lpp 2.